The following is a 130-amino-acid chain: Small ribosomal subunit protein uS8 (130 aa).

It belongs to the universal ribosomal protein uS8 family. As to quaternary structure, part of the 30S ribosomal subunit. Contacts proteins S5 and S12.

In terms of biological role, one of the primary rRNA binding proteins, it binds directly to 16S rRNA central domain where it helps coordinate assembly of the platform of the 30S subunit. This is Small ribosomal subunit protein uS8 from Pectobacterium atrosepticum (strain SCRI 1043 / ATCC BAA-672) (Erwinia carotovora subsp. atroseptica).